A 431-amino-acid chain; its full sequence is Probable indole-3-pyruvate monooxygenase YUCCA7 (431 aa).

36-41 is an FAD binding site; it reads GAGPSG. 207–212 provides a ligand contact to NADP(+); that stretch reads GCGNSG.

Belongs to the FMO family. Requires FAD as cofactor. In terms of tissue distribution, expressed in shoot apex regions and siliques, and at high levels in roots. Detected in flowers, stems and leaves.

The catalysed reaction is indole-3-pyruvate + NADPH + O2 + H(+) = (indol-3-yl)acetate + CO2 + NADP(+) + H2O. Its pathway is plant hormone metabolism; auxin biosynthesis. Involved in auxin biosynthesis. Belongs to the set of redundant YUCCA genes probably responsible for auxin biosynthesis in roots. This is Probable indole-3-pyruvate monooxygenase YUCCA7 (YUC7) from Arabidopsis thaliana (Mouse-ear cress).